Reading from the N-terminus, the 311-residue chain is Putative dihydroorotate dehydrogenase A (fumarate) (311 aa).

Substrate-binding positions include Lys45, 69–73 (NSMGL), and Asn128. 45-46 (KT) lines the FMN pocket. Residue Asn128 coordinates FMN. Cys131 (nucleophile) is an active-site residue. Lys165 and Val193 together coordinate FMN. Residue 194–195 (NS) coordinates substrate. Residues Gly220, 248–249 (GG), and 270–271 (GT) each bind FMN.

Belongs to the dihydroorotate dehydrogenase family. Type 1 subfamily. Homodimer. Requires FMN as cofactor.

Its subcellular location is the cytoplasm. The catalysed reaction is (S)-dihydroorotate + fumarate = orotate + succinate. It functions in the pathway pyrimidine metabolism; UMP biosynthesis via de novo pathway. Catalyzes the conversion of dihydroorotate to orotate with fumarate as the electron acceptor. The polypeptide is Putative dihydroorotate dehydrogenase A (fumarate) (pyrD) (Streptococcus pyogenes serotype M18 (strain MGAS8232)).